A 550-amino-acid chain; its full sequence is Carboxylesterase 4A (550 aa).

The N-terminal stretch at 1–20 (MNWILCLSLTLLLVVQTAWG) is a signal peptide. Cys-88 and Cys-116 are joined by a disulfide. Ser-221 acts as the Acyl-ester intermediate in catalysis. A disulfide bridge links Cys-273 with Cys-284. Residue Asn-276 is glycosylated (N-linked (GlcNAc...) asparagine). Glu-353 acts as the Charge relay system in catalysis. A glycan (N-linked (GlcNAc...) asparagine) is linked at Asn-386. Residue His-465 is the Charge relay system of the active site.

It belongs to the type-B carboxylesterase/lipase family.

The protein localises to the secreted. Its function is as follows. Probable carboxylesterase. The sequence is that of Carboxylesterase 4A (CES4A) from Bos taurus (Bovine).